We begin with the raw amino-acid sequence, 242 residues long: uncharacterized protein (242 aa).

An S4 RNA-binding domain is found at 2–69 (YRLAKIISNA…KPRLWIYYKP (68 aa)). D102 functions as the Nucleophile in the catalytic mechanism.

This sequence belongs to the pseudouridine synthase RsuA family.

The catalysed reaction is a uridine in RNA = a pseudouridine in RNA. This is an uncharacterized protein from Rickettsia typhi (strain ATCC VR-144 / Wilmington).